A 700-amino-acid chain; its full sequence is Elongation factor G (700 aa).

One can recognise a tr-type G domain in the interval 10-286 (NKVRNIGIMA…AVIDYLPNPL (277 aa)). Residues 19-26 (AHIDAGKT), 83-87 (DTPGH), and 137-140 (NKMD) contribute to the GTP site.

This sequence belongs to the TRAFAC class translation factor GTPase superfamily. Classic translation factor GTPase family. EF-G/EF-2 subfamily.

The protein resides in the cytoplasm. Its function is as follows. Catalyzes the GTP-dependent ribosomal translocation step during translation elongation. During this step, the ribosome changes from the pre-translocational (PRE) to the post-translocational (POST) state as the newly formed A-site-bound peptidyl-tRNA and P-site-bound deacylated tRNA move to the P and E sites, respectively. Catalyzes the coordinated movement of the two tRNA molecules, the mRNA and conformational changes in the ribosome. This is Elongation factor G from Rhodococcus opacus (strain B4).